Consider the following 636-residue polypeptide: Sodium-dependent nutrient amino acid transporter 1 (636 aa).

Residues 1–40 (MELKTMPQNGANNGNPQGNTSNNNNTNDSSNSNSNNNNKT) form a disordered region. Residues 1 to 50 (MELKTMPQNGANNGNPQGNTSNNNNTNDSSNSNSNNNNKTERTNWSNGLE) are Cytoplasmic-facing. The segment covering 7-40 (PQNGANNGNPQGNTSNNNNTNDSSNSNSNNNNKT) has biased composition (low complexity). The next 3 membrane-spanning stretches (helical) occupy residues 51 to 71 (FLMSCISVSVGLGNIWRFPFT), 78 to 98 (GAFLIPYIIVLFMIGKPMYYL), and 131 to 151 (TICIISYYSSLLALTLYYLAV). N184 carries an N-linked (GlcNAc...) asparagine glycan. 9 helical membrane-spanning segments follow: residues 225 to 245 (PDWKLTIALFVSWIVIFLVIM), 254 to 274 (AAYFLALFPYVVLFTLLGRAV), 303 to 323 (AVVQCFFSLAVGSGPIIMFSS), 337 to 357 (IVTTLDTLTSLLGGITIFAIL), 397 to 417 (LFSALFFFMLFVLGIGSIVAL), 436 to 456 (VALVTSICGFLMGLVYVTPGG), 469 to 489 (TYVVFILAIFELVGIAWIYGV), 511 to 531 (CWLIFTPIMMIVIFIYSMVTI), and 547 to 567 (VAGWLLFAIGASQFPLWGWWY).

This sequence belongs to the sodium:neurotransmitter symporter (SNF) (TC 2.A.22) family.

The protein resides in the membrane. In terms of biological role, unusual broad substrate spectrum amino acid:sodium cotransporter that promotes absorption of the D isomers of essential amino acids. Neutral amino acids are the preferred substrates, especially methionine and phenylalanine. This is Sodium-dependent nutrient amino acid transporter 1 from Drosophila grimshawi (Hawaiian fruit fly).